We begin with the raw amino-acid sequence, 297 residues long: UDP-N-acetylenolpyruvoylglucosamine reductase (297 aa).

The 174-residue stretch at 22-195 (RVGGPAQYYA…LAGRFRLHRA (174 aa)) folds into the FAD-binding PCMH-type domain. Arg-169 is a catalytic residue. The active-site Proton donor is Ser-223. Glu-293 is a catalytic residue.

The protein belongs to the MurB family. It depends on FAD as a cofactor.

Its subcellular location is the cytoplasm. It carries out the reaction UDP-N-acetyl-alpha-D-muramate + NADP(+) = UDP-N-acetyl-3-O-(1-carboxyvinyl)-alpha-D-glucosamine + NADPH + H(+). Its pathway is cell wall biogenesis; peptidoglycan biosynthesis. Functionally, cell wall formation. The sequence is that of UDP-N-acetylenolpyruvoylglucosamine reductase from Chloroflexus aggregans (strain MD-66 / DSM 9485).